The chain runs to 178 residues: Protein GrpE (178 aa).

The span at 1–11 (MADELSEKSVE) shows a compositional bias: basic and acidic residues. The disordered stretch occupies residues 1–32 (MADELSEKSVEGTEEDGESAPAEGTTEGVPVD).

This sequence belongs to the GrpE family. As to quaternary structure, homodimer.

It is found in the cytoplasm. In terms of biological role, participates actively in the response to hyperosmotic and heat shock by preventing the aggregation of stress-denatured proteins, in association with DnaK and GrpE. It is the nucleotide exchange factor for DnaK and may function as a thermosensor. Unfolded proteins bind initially to DnaJ; upon interaction with the DnaJ-bound protein, DnaK hydrolyzes its bound ATP, resulting in the formation of a stable complex. GrpE releases ADP from DnaK; ATP binding to DnaK triggers the release of the substrate protein, thus completing the reaction cycle. Several rounds of ATP-dependent interactions between DnaJ, DnaK and GrpE are required for fully efficient folding. The sequence is that of Protein GrpE from Methanothrix thermoacetophila (strain DSM 6194 / JCM 14653 / NBRC 101360 / PT) (Methanosaeta thermophila).